Consider the following 366-residue polypeptide: Ribosomal RNA large subunit methyltransferase M (366 aa).

Residues S188, 221–224 (CPGG), D240, D260, and D277 each bind S-adenosyl-L-methionine. K306 serves as the catalytic Proton acceptor.

It belongs to the class I-like SAM-binding methyltransferase superfamily. RNA methyltransferase RlmE family. RlmM subfamily. As to quaternary structure, monomer.

It is found in the cytoplasm. The catalysed reaction is cytidine(2498) in 23S rRNA + S-adenosyl-L-methionine = 2'-O-methylcytidine(2498) in 23S rRNA + S-adenosyl-L-homocysteine + H(+). Its function is as follows. Catalyzes the 2'-O-methylation at nucleotide C2498 in 23S rRNA. This is Ribosomal RNA large subunit methyltransferase M from Klebsiella pneumoniae subsp. pneumoniae (strain ATCC 700721 / MGH 78578).